The chain runs to 219 residues: 3-demethoxyubiquinol 3-hydroxylase (219 aa).

Residues 21–51 (RTLTPGTTQAERTPAHAAPAPDAPEAGTLPS) are disordered. The span at 35–46 (AHAAPAPDAPEA) shows a compositional bias: low complexity. Fe cation-binding residues include glutamate 68, glutamate 98, histidine 101, glutamate 150, glutamate 182, and histidine 185.

It belongs to the COQ7 family. It depends on Fe cation as a cofactor.

The protein localises to the cell membrane. The catalysed reaction is a 5-methoxy-2-methyl-3-(all-trans-polyprenyl)benzene-1,4-diol + AH2 + O2 = a 3-demethylubiquinol + A + H2O. Its pathway is cofactor biosynthesis; ubiquinone biosynthesis. Functionally, catalyzes the hydroxylation of 2-nonaprenyl-3-methyl-6-methoxy-1,4-benzoquinol during ubiquinone biosynthesis. The sequence is that of 3-demethoxyubiquinol 3-hydroxylase from Alcanivorax borkumensis (strain ATCC 700651 / DSM 11573 / NCIMB 13689 / SK2).